Here is a 139-residue protein sequence, read N- to C-terminus: MAGGKGKTGGKTGGKGDSHVKTTKSHSAKAGLQFPCGRIKRHLRTITRQKTRIGAKASIYLTAVLEYLTAEVLELAGNAAKDLKVKRITPRHLQLAIRGDEELDTLIRATIAFGGVLPHINRALLLKVEQKKKGAKVEA.

The span at 1 to 13 shows a compositional bias: gly residues; the sequence is MAGGKGKTGGKTG. Residues 1–28 form a disordered region; it reads MAGGKGKTGGKTGGKGDSHVKTTKSHSA. Lys5 and Lys11 each carry N6-acetyllysine.

Belongs to the histone H2A family. In terms of assembly, the nucleosome is a histone octamer containing two molecules each of H2A, H2B, H3 and H4 assembled in one H3-H4 heterotetramer and two H2A-H2B heterodimers. The octamer wraps approximately 147 bp of DNA. H2A or its variant H2A.Z forms a heterodimer with H2B. H2A.Z associates with the VPS72/SWC2 subunit of the SWR1 chromatin remodeling complex. Also interacts with RBP1/DNA-directed RNA polymerase II largest subunit. Post-translationally, acetylated once deposited into chromatin.

Its subcellular location is the nucleus. The protein localises to the chromosome. Functionally, variant histone H2A which can replace H2A in some nucleosomes. Nucleosomes wrap and compact DNA into chromatin, limiting DNA accessibility to the cellular machineries which require DNA as a template. Histones thereby play a central role in transcription regulation, DNA repair, DNA replication and chromosomal stability. DNA accessibility is regulated via a complex set of post-translational modifications of histones, also called histone code, and nucleosome remodeling. This variant is enriched at promoters, it may keep them in a repressed state until the appropriate activation signal is received. Near telomeres, it may counteract gene silencing caused by the spread of heterochromatin proteins. Required for the RNA polymerase II and SPT15/TBP recruitment to the target genes. Involved in chromosome stability. In Phaeosphaeria nodorum (strain SN15 / ATCC MYA-4574 / FGSC 10173) (Glume blotch fungus), this protein is Histone H2A.Z (HTZ1).